Here is a 423-residue protein sequence, read N- to C-terminus: Phospholipase A1-IIalpha (423 aa).

Residues 194–217 (SAQEQVQGELKRLLELYKDEEISI) are a coiled coil. Ser-223 acts as the Acyl-ester intermediate in catalysis. Active-site charge relay system residues include Ser-223, Asp-290, and His-327. Residues 399–423 (HDDDVDADDNDDSSTSNQLQELNTD) are disordered. Positions 401–410 (DDVDADDNDD) are enriched in acidic residues. Over residues 411 to 423 (SSTSNQLQELNTD) the composition is skewed to polar residues.

It belongs to the AB hydrolase superfamily. Lipase family.

The protein resides in the cytoplasm. Functionally, acylhydrolase that catalyzes the hydrolysis of phospholipids at the sn-1 position. The polypeptide is Phospholipase A1-IIalpha (Arabidopsis thaliana (Mouse-ear cress)).